The sequence spans 146 residues: Hemoglobin subunit beta-1 (146 aa).

In terms of domain architecture, Globin spans 2–146 (HWTAEEKALI…VAHALARRYH (145 aa)). His-92 is a binding site for heme b.

Belongs to the globin family. Heterotetramer of two alpha chains and two beta chains. In terms of tissue distribution, red blood cells.

In terms of biological role, involved in oxygen transport from the lung to the various peripheral tissues. This is Hemoglobin subunit beta-1 from Saara hardwickii (Indian spiny-tailed lizard).